The following is a 312-amino-acid chain: Protease HtpX homolog (312 aa).

The next 2 helical transmembrane spans lie at 6 to 26 and 28 to 48; these read TAVLLAGLTALFMVVGFAIGG and GGMMVALLVAAGMNLFSYWYA. Histidine 130 lines the Zn(2+) pocket. Residue glutamate 131 is part of the active site. A Zn(2+)-binding site is contributed by histidine 134. 2 helical membrane-spanning segments follow: residues 145–165 and 173–193; these read ITASIAGAISMLANFGLFFGG and PFGGISAILMAILAPIAAMVV. Residue glutamate 202 participates in Zn(2+) binding. Positions 287–297 are enriched in low complexity; it reads PAPARAAPARG. The interval 287-312 is disordered; the sequence is PAPARAAPARGPWGGNTGGTRRGPWG. Residues 298-312 show a composition bias toward gly residues; the sequence is PWGGNTGGTRRGPWG.

The protein belongs to the peptidase M48B family. Zn(2+) is required as a cofactor.

The protein localises to the cell inner membrane. This chain is Protease HtpX homolog, found in Azorhizobium caulinodans (strain ATCC 43989 / DSM 5975 / JCM 20966 / LMG 6465 / NBRC 14845 / NCIMB 13405 / ORS 571).